Here is a 376-residue protein sequence, read N- to C-terminus: MECIIKLPQRFNKNKSKKNPLRIFDSTVLNHQPDHIPQEFVWPDHEKPSKNVPILQVPVIDLAGFLSNDPLLVSEAERLVSEAAKKHGFFLVTNHGVDERLLSTAHKLMDTFFKSPNYEKLKAQRKVGETTGYASSFVGRFKENLPWKETLSFSFSPTEKSENYSQTVKNYISKTMGDGYKDFGSVYQEYAETMSNLSLKIMELLGMSLGIKREHFREFFEDNESIFRLNYYPKCKQPDLVLGTGPHCDPTSLTILQQDQVSGLQVFVDNQWQSIPPIPQALVVNIGDTLMALTNGIYKSCLHRAVVNGETTRKTLAFFLCPKVDKVVKPPSELEGERAYPDFTWSMFLEFTMKHYRADMNTLEEFTNWLKNKGSF.

Positions 222–322 constitute a Fe2OG dioxygenase domain; that stretch reads DNESIFRLNY…RKTLAFFLCP (101 aa). The Fe cation site is built by H247, D249, and H303. R313 is an active-site residue.

This sequence belongs to the iron/ascorbate-dependent oxidoreductase family. GA20OX subfamily. Fe(2+) is required as a cofactor. L-ascorbate serves as cofactor. As to expression, expressed in roots. Detected in leaves, inflorescences and siliques, but not in stems and dry seeds.

It carries out the reaction gibberellin A12 + 2 2-oxoglutarate + 3 O2 + H(+) = gibberellin A9 + 2 succinate + 3 CO2 + 2 H2O. It catalyses the reaction gibberellin A53 + 2 2-oxoglutarate + 3 O2 + H(+) = gibberellin A20 + 2 succinate + 3 CO2 + 2 H2O. It participates in plant hormone biosynthesis; gibberellin biosynthesis. In terms of biological role, key oxidase enzyme in the biosynthesis of gibberellin that catalyzes the conversion of GA12 and GA53 to GA9 and GA20 respectively, via a three-step oxidation at C-20 of the GA skeleton. This is Gibberellin 20 oxidase 4 (GA20OX4) from Arabidopsis thaliana (Mouse-ear cress).